The sequence spans 187 residues: UPF0301 protein Sputcn32_2681 (187 aa).

The protein belongs to the UPF0301 (AlgH) family.

This chain is UPF0301 protein Sputcn32_2681, found in Shewanella putrefaciens (strain CN-32 / ATCC BAA-453).